The primary structure comprises 125 residues: Inner membrane protein YbjM (125 aa).

The Cytoplasmic portion of the chain corresponds to 1–6; sequence MKHKQR. Residues 7 to 27 form a helical membrane-spanning segment; the sequence is WAGAICCFVLFIVVCLFLATH. Residues 28–34 lie on the Periplasmic side of the membrane; that stretch reads MKGAFRA. Residues 35-55 traverse the membrane as a helical segment; it reads AGHPEIGLLFFILPGAVASFF. Topologically, residues 56–64 are cytoplasmic; the sequence is SQRREVLKP. Residues 65 to 85 traverse the membrane as a helical segment; it reads LFGAMLAAPCSMLIMRLFFSP. The Periplasmic portion of the chain corresponds to 86–92; it reads TRSFWQE. The chain crosses the membrane as a helical span at residues 93–113; the sequence is LAWLLSAVFWCALGALCFLFI. Residues 114-125 lie on the Cytoplasmic side of the membrane; the sequence is SSLFKPQHRKNQ.

It is found in the cell inner membrane. The protein is Inner membrane protein YbjM (ybjM) of Escherichia coli O157:H7.